The chain runs to 417 residues: Pelargonidin 3-O-(6-caffeoylglucoside) 5-O-(6-O-malonylglucoside) 4'''-malonyltransferase (417 aa).

Active-site proton acceptor residues include His147 and Asp360.

Belongs to the plant acyltransferase family. In terms of assembly, monomer. In terms of tissue distribution, expressed at higher level in recently opened, fully pigmented flowers.

It catalyses the reaction 4'''-demalonylsalvianin + malonyl-CoA = salvianin + CoA. It functions in the pathway pigment biosynthesis; anthocyanin biosynthesis. Inhibited by the following metal ions: Cd(2+), Cu(2+), Fe(2+), Hg(2+) and Zn(2+). Activity is strongly inhibited by CoA-SH and partially inhibited by acetyl-CoA, caffeic acid and bisdemalonylsalvianin. Its function is as follows. Catalyzes the transfer of the malonyl group from malonyl-CoA to the 4'''-hydroxyl group of the 5-glucosyl moiety of anthocyanins. Anthocyanins are ubiquitous colored pigments that are responsible for petal color. The sequence is that of Pelargonidin 3-O-(6-caffeoylglucoside) 5-O-(6-O-malonylglucoside) 4'''-malonyltransferase from Salvia splendens (Scarlet sage).